Reading from the N-terminus, the 589-residue chain is NADP-dependent malic enzyme (589 aa).

Tyr137 acts as the Proton donor in catalysis. Arg190 lines the NAD(+) pocket. Catalysis depends on Lys208, which acts as the Proton acceptor. A divalent metal cation is bound by residues Glu280, Asp281, and Asp304. Asp304 is an NAD(+) binding site. 333 to 349 (LFLGAGEAGTGIAELIA) lines the NADP(+) pocket. Position 445 (Asn445) interacts with NAD(+).

The protein belongs to the malic enzymes family. As to quaternary structure, homotetramer. Requires Mg(2+) as cofactor. It depends on Mn(2+) as a cofactor.

The protein resides in the cytoplasm. It catalyses the reaction (S)-malate + NADP(+) = pyruvate + CO2 + NADPH. It carries out the reaction oxaloacetate + H(+) = pyruvate + CO2. The polypeptide is NADP-dependent malic enzyme (ME1) (Phaseolus vulgaris (Kidney bean)).